We begin with the raw amino-acid sequence, 506 residues long: NAD(P)H-quinone oxidoreductase subunit 2 (506 aa).

The next 13 membrane-spanning stretches (helical) occupy residues 14-34 (AIIP…VDLA), 42-62 (WAPI…ALQW), 79-99 (LAIA…LISW), 108-128 (PIGE…LLCG), 132-152 (LISV…LSGY), 167-187 (LLVG…LYGL), 206-226 (FITS…IAAV), 240-260 (PTPV…AFAI), 276-296 (LLFT…ALAQ), 302-322 (MLAY…VSGT), 330-350 (VLYL…VILF), 374-394 (LGLS…GFFG), and 409-429 (LLVI…ISVI).

It belongs to the complex I subunit 2 family. NDH-1 can be composed of about 15 different subunits; different subcomplexes with different compositions have been identified which probably have different functions.

It localises to the cellular thylakoid membrane. The enzyme catalyses a plastoquinone + NADH + (n+1) H(+)(in) = a plastoquinol + NAD(+) + n H(+)(out). It catalyses the reaction a plastoquinone + NADPH + (n+1) H(+)(in) = a plastoquinol + NADP(+) + n H(+)(out). Functionally, NDH-1 shuttles electrons from an unknown electron donor, via FMN and iron-sulfur (Fe-S) centers, to quinones in the respiratory and/or the photosynthetic chain. The immediate electron acceptor for the enzyme in this species is believed to be plastoquinone. Couples the redox reaction to proton translocation, and thus conserves the redox energy in a proton gradient. Cyanobacterial NDH-1 also plays a role in inorganic carbon-concentration. This Prochlorococcus marinus (strain AS9601) protein is NAD(P)H-quinone oxidoreductase subunit 2.